Here is a 415-residue protein sequence, read N- to C-terminus: MKGSYKSRWVIVIVVVIAAIAAFWFWQGRNDSQSAAPGATKQAQQSPAGGRRGMRADPLAPVQAATAVEQAVPRYLTGLGTITAANTVTVRSRVDGQLMALHFQEGQQVKAGDLLAEIDPSQFKVALAQAQGQLAKDKATLANARRDLARYQQLAKTNLVSRQELDAQQALVSETEGTIKADEASVASAQLQLDWSRITAPVDGRVGLKQVDVGNQISSGDTTGIVVITQTHPIDLVFTLPESDIATVVQAQKAGKPLVVEAWDRTNSKKLSEGTLLSLDNQIDATTGTIKVKARFNNQDDALFPNQFVNARMLVDTEQNAVVIPTAALQMGNEGHFVWVLNSENKVSKHLVTPGIQDSQKVVIRAGISAGDRVVTDGIDRLTEGAKVEVVETQSATTPEEKATSREYAKKGARS.

An N-terminal signal peptide occupies residues 1–21 (MKGSYKSRWVIVIVVVIAAIA). Residues 31 to 47 (DSQSAAPGATKQAQQSP) are compositionally biased toward polar residues. Disordered regions lie at residues 31–56 (DSQS…GMRA) and 390–415 (VVET…GARS). Basic and acidic residues predominate over residues 399-415 (PEEKATSREYAKKGARS).

The protein belongs to the membrane fusion protein (MFP) (TC 8.A.1) family. As to quaternary structure, part of a tripartite efflux system composed of MdtA, MdtB and MdtC.

The protein localises to the cell inner membrane. In terms of biological role, the MdtABC tripartite complex confers resistance against novobiocin and deoxycholate. In Escherichia coli O6:H1 (strain CFT073 / ATCC 700928 / UPEC), this protein is Multidrug resistance protein MdtA.